We begin with the raw amino-acid sequence, 271 residues long: Interleukin-1 alpha (271 aa).

Positions 1–112 (MAKVPDMFED…DSEEEIIKPR (112 aa)) are excised as a propeptide. Lys82 is subject to N6-acetyllysine. Residues 82–86 (KKRRL) form a nuclear localization signal (NLS) region. Ser87 is subject to Phosphoserine. N-linked (GlcNAc...) asparagine glycans are attached at residues Asn102, Asn121, Asn137, Asn141, and Asn211.

It belongs to the IL-1 family. Monomer. Interacts with TMED10; the interaction mediates the translocation from the cytoplasm into the ERGIC (endoplasmic reticulum-Golgi intermediate compartment) and thereby secretion. Interacts with IL1R1. Interacts with S100A13; this interaction is the first step in the export of IL1A, followed by direct translocation of this complex across the plasma membrane. In terms of processing, acetylated within its nuclear localization sequence, which impacts subcellular localization. Post-translationally, proteolytic processed by CAPN1 in a calcium-dependent manner. Cleavage from 31 kDa precursor to 18 kDa biologically active molecules. Phosphorylated. Phosphorylation greatly enhances susceptibility to digestion and promotes the conversion of pre-IL1A alpha to the biologically active IL1A.

Its subcellular location is the nucleus. It localises to the cytoplasm. The protein localises to the secreted. Its function is as follows. Cytokine constitutively present intracellularly in nearly all resting non-hematopoietic cells that plays an important role in inflammation and bridges the innate and adaptive immune systems. After binding to its receptor IL1R1 together with its accessory protein IL1RAP, forms the high affinity interleukin-1 receptor complex. Signaling involves the recruitment of adapter molecules such as MYD88, IRAK1 or IRAK4. In turn, mediates the activation of NF-kappa-B and the three MAPK pathways p38, p42/p44 and JNK pathways. Within the cell, acts as an alarmin and cell death results in its liberation in the extracellular space after disruption of the cell membrane to induce inflammation and alert the host to injury or damage. In addition to its role as a danger signal, which occurs when the cytokine is passively released by cell necrosis, directly senses DNA damage and acts as signal for genotoxic stress without loss of cell integrity. In Macaca mulatta (Rhesus macaque), this protein is Interleukin-1 alpha (IL1A).